The primary structure comprises 179 residues: ATP synthase subunit delta (179 aa).

The protein belongs to the ATPase delta chain family. As to quaternary structure, F-type ATPases have 2 components, F(1) - the catalytic core - and F(0) - the membrane proton channel. F(1) has five subunits: alpha(3), beta(3), gamma(1), delta(1), epsilon(1). F(0) has three main subunits: a(1), b(2) and c(10-14). The alpha and beta chains form an alternating ring which encloses part of the gamma chain. F(1) is attached to F(0) by a central stalk formed by the gamma and epsilon chains, while a peripheral stalk is formed by the delta and b chains.

The protein localises to the cell membrane. In terms of biological role, f(1)F(0) ATP synthase produces ATP from ADP in the presence of a proton or sodium gradient. F-type ATPases consist of two structural domains, F(1) containing the extramembraneous catalytic core and F(0) containing the membrane proton channel, linked together by a central stalk and a peripheral stalk. During catalysis, ATP synthesis in the catalytic domain of F(1) is coupled via a rotary mechanism of the central stalk subunits to proton translocation. Functionally, this protein is part of the stalk that links CF(0) to CF(1). It either transmits conformational changes from CF(0) to CF(1) or is implicated in proton conduction. The sequence is that of ATP synthase subunit delta from Metamycoplasma arthritidis (strain 158L3-1) (Mycoplasma arthritidis).